A 309-amino-acid chain; its full sequence is Nucleotide-binding protein cgR_1639 (309 aa).

Residue 32 to 39 (GMSGAGLS) participates in ATP binding. Residue 83–86 (DVRS) coordinates GTP.

It belongs to the RapZ-like family.

Functionally, displays ATPase and GTPase activities. In Corynebacterium glutamicum (strain R), this protein is Nucleotide-binding protein cgR_1639.